Consider the following 263-residue polypeptide: Lens fiber major intrinsic protein (263 aa).

The Cytoplasmic portion of the chain corresponds to 1–9 (MWELRSASF). Residues 10–29 (WRAIFAEFFATLFYVFFGLG) traverse the membrane as a helical segment. Residues 30–41 (ASLRWAPGPLHV) are Extracellular-facing. Residues 42–59 (LQVALAFGLALATLVQAV) form a helical membrane-spanning segment. Over 60–61 (GH) the chain is Cytoplasmic. The discontinuously helical intramembrane region spans 62–77 (ISGAHVNPAVTFAFLV). The NPA 1 motif lies at 68–70 (NPA). The Cytoplasmic portion of the chain corresponds to 78-82 (GSQMS). A helical transmembrane segment spans residues 83-106 (LLRAICYMAAQLLGAVAGAAVLYS). Topologically, residues 107-127 (VTPAAVRGNLALNTLHPGVSL) are extracellular. A helical transmembrane segment spans residues 128–148 (GQATTVEIFLTLQFVLCIFAT). Residues 149–156 (YDERRNGR) lie on the Cytoplasmic side of the membrane. A helical membrane pass occupies residues 157–175 (LGSVALAVGFSLTLGHLFG). Residues 176-178 (MYY) lie on the Extracellular side of the membrane. Residues 179–193 (TGAGMNPARSFAPAI) constitute an intramembrane region (discontinuously helical). Residues 184–186 (NPA) carry the NPA 2 motif. Topologically, residues 194 to 200 (LTRNFTN) are extracellular. A helical transmembrane segment spans residues 201–222 (HWVYWVGPIIGGGLASLLYDFL). Residues 223-263 (LFPRLKSVSERLSILKGARPSDSNGQPEGTGEPVELKTQAL) are Cytoplasmic-facing. The segment at 227–237 (LKSVSERLSIL) is interaction with CALM. Residues Ser-235, Ser-243, and Ser-245 each carry the phosphoserine modification. The tract at residues 240 to 263 (ARPSDSNGQPEGTGEPVELKTQAL) is disordered. A Deamidated asparagine modification is found at Asn-246.

This sequence belongs to the MIP/aquaporin (TC 1.A.8) family. Homotetramer; each monomer provides an independent water pore. Two homotetramers on opposing membranes can dimerize, forming a cell-cell junction. Interacts with CALM; the calcium-calmodulin/CALM complex interacts with the cytoplasmic domains of two aquaporins, leading to channel closure. Interacts with BFSP1 (via C-terminus); prevents calcium-dependent inhibition of the water channel activity. Post-translationally, subject to partial proteolytic cleavage in the eye lens core. Partial proteolysis promotes interactions between tetramers from adjoining membranes. In terms of processing, fatty acylated at Met-1 and Lys-238. The acyl modifications, in decreasing order of ion abundance, are: oleoyl (C18:1) &gt; palmitoyl (C16:0) &gt; stearoyl (C18:0) &gt; eicosenoyl (C20:1) &gt; dihomo-gamma-linolenoyl (C20:3) &gt; palmitoleoyl (C16:1) &gt; eicosadienoyl (C20:2).

It is found in the cell membrane. It localises to the cell junction. It carries out the reaction H2O(in) = H2O(out). With respect to regulation, the water channel activity is inhibited by calcium through calmodulin/CALM. In terms of biological role, aquaporins form homotetrameric transmembrane channels, with each monomer independently mediating water transport across the plasma membrane along its osmotic gradient. Specifically expressed in lens fiber cells, this aquaporin is crucial for maintaining lens water homeostasis and transparency. Beyond water permeability, it also acts as a cell-to-cell adhesion molecule, forming thin junctions between lens fiber cells that are essential for maintaining the ordered structure and transparency of the lens. The protein is Lens fiber major intrinsic protein of Oryctolagus cuniculus (Rabbit).